We begin with the raw amino-acid sequence, 134 residues long: Large ribosomal subunit protein uL22 (134 aa).

Belongs to the universal ribosomal protein uL22 family. Part of the 50S ribosomal subunit. Contacts protein L32.

Its function is as follows. This protein binds specifically to 23S rRNA; its binding is stimulated by other ribosomal proteins, e.g. L4, L17, and L20. It is important during the early stages of 50S assembly. It makes multiple contacts with different domains of the 23S rRNA in the assembled 50S subunit and ribosome. In terms of biological role, the globular domain of the protein is located by the polypeptide exit tunnel on the outside of the subunit while an extended beta-hairpin forms part of the wall of the tunnel. Forms a pair of 'tweezers' with L32 that hold together two different domains of the 23S rRNA. Interacts with the tunnel-blocking modified macrolide azithromycin. Upon binding of the macrolide troleadomycin to the ribosome, the tip of the beta-hairpin is displaced, which severely restricts the tunnel. This and experiments in E.coli have led to the suggestion that it is part of the gating mechanism involved in translation arrest in the absence of the protein export system. The sequence is that of Large ribosomal subunit protein uL22 (rplV) from Deinococcus radiodurans (strain ATCC 13939 / DSM 20539 / JCM 16871 / CCUG 27074 / LMG 4051 / NBRC 15346 / NCIMB 9279 / VKM B-1422 / R1).